Reading from the N-terminus, the 210-residue chain is Ribonuclease HII (210 aa).

An RNase H type-2 domain is found at 17-206 (DIICGVDEAG…VRALLGGVTP (190 aa)). A divalent metal cation-binding residues include Asp23, Glu24, and Asp115.

Belongs to the RNase HII family. The cofactor is Mn(2+). Mg(2+) is required as a cofactor.

The protein localises to the cytoplasm. It catalyses the reaction Endonucleolytic cleavage to 5'-phosphomonoester.. Functionally, endonuclease that specifically degrades the RNA of RNA-DNA hybrids. The sequence is that of Ribonuclease HII from Janthinobacterium sp. (strain Marseille) (Minibacterium massiliensis).